Here is a 217-residue protein sequence, read N- to C-terminus: MTEHDLFDLAPYIDHTQLDPLATRADIERCCGEAEQWKFAAVCVMPVWVKTAVQLLHRTPVKVCTVIGFPSGAHTSSTKLYEAQEAVDSGATELDVVINLGWLKEGNSEAVYRDIAQICAETGVTVKAILETTVLTEEEKQLAVDICLDAGVAFLKTSTGWRGGATVADVRLLKRLSRDRVGIKASGGIRTREQALELINAGATRLGTSRSLDLMQV.

D95 acts as the Proton donor/acceptor in catalysis. The active-site Schiff-base intermediate with acetaldehyde is the K156. The active-site Proton donor/acceptor is the K184.

This sequence belongs to the DeoC/FbaB aldolase family. DeoC type 1 subfamily.

It localises to the cytoplasm. The enzyme catalyses 2-deoxy-D-ribose 5-phosphate = D-glyceraldehyde 3-phosphate + acetaldehyde. It functions in the pathway carbohydrate degradation; 2-deoxy-D-ribose 1-phosphate degradation; D-glyceraldehyde 3-phosphate and acetaldehyde from 2-deoxy-alpha-D-ribose 1-phosphate: step 2/2. Functionally, catalyzes a reversible aldol reaction between acetaldehyde and D-glyceraldehyde 3-phosphate to generate 2-deoxy-D-ribose 5-phosphate. In Thermosynechococcus vestitus (strain NIES-2133 / IAM M-273 / BP-1), this protein is Deoxyribose-phosphate aldolase.